The chain runs to 356 residues: tRNA N6-adenosine threonylcarbamoyltransferase (356 aa).

Residues H115 and H119 each contribute to the Fe cation site. Substrate contacts are provided by residues 138-142, D171, G184, and N283; that span reads LVSGG. Residue D311 coordinates Fe cation.

It belongs to the KAE1 / TsaD family. Requires Fe(2+) as cofactor.

The protein resides in the cytoplasm. The catalysed reaction is L-threonylcarbamoyladenylate + adenosine(37) in tRNA = N(6)-L-threonylcarbamoyladenosine(37) in tRNA + AMP + H(+). Required for the formation of a threonylcarbamoyl group on adenosine at position 37 (t(6)A37) in tRNAs that read codons beginning with adenine. Is involved in the transfer of the threonylcarbamoyl moiety of threonylcarbamoyl-AMP (TC-AMP) to the N6 group of A37, together with TsaE and TsaB. TsaD likely plays a direct catalytic role in this reaction. The sequence is that of tRNA N6-adenosine threonylcarbamoyltransferase from Prochlorococcus marinus subsp. pastoris (strain CCMP1986 / NIES-2087 / MED4).